Here is a 192-residue protein sequence, read N- to C-terminus: Ion-translocating oxidoreductase complex subunit B (192 aa).

Positions 1 to 26 are hydrophobic; sequence MNAIWIAVAAVSLLALAFGAILGYAS. The 60-residue stretch at 32–91 folds into the 4Fe-4S domain; that stretch reads EDDPVVEKIDEILPQSQCGQCGYPGCRPYAEAISCNGEKINRCAPGGEAVMLKIAELLNV. Cys-49, Cys-52, Cys-57, Cys-74, Cys-117, Cys-120, Cys-123, Cys-127, Cys-147, Cys-150, Cys-153, and Cys-157 together coordinate [4Fe-4S] cluster. 4Fe-4S ferredoxin-type domains follow at residues 108–137 and 138–167; these read MVAV…GATR and AMHT…LQPV.

Belongs to the 4Fe4S bacterial-type ferredoxin family. RnfB subfamily. The complex is composed of six subunits: RsxA, RsxB, RsxC, RsxD, RsxE and RsxG. It depends on [4Fe-4S] cluster as a cofactor.

The protein resides in the cell inner membrane. Part of a membrane-bound complex that couples electron transfer with translocation of ions across the membrane. Required to maintain the reduced state of SoxR. This is Ion-translocating oxidoreductase complex subunit B from Escherichia coli O81 (strain ED1a).